Consider the following 239-residue polypeptide: Small ribosomal subunit protein uS2 (239 aa).

It belongs to the universal ribosomal protein uS2 family.

The protein is Small ribosomal subunit protein uS2 of Prochlorococcus marinus (strain MIT 9313).